Reading from the N-terminus, the 235-residue chain is Aspartate/glutamate leucyltransferase (235 aa).

Belongs to the R-transferase family. Bpt subfamily.

The protein resides in the cytoplasm. The enzyme catalyses N-terminal L-glutamyl-[protein] + L-leucyl-tRNA(Leu) = N-terminal L-leucyl-L-glutamyl-[protein] + tRNA(Leu) + H(+). The catalysed reaction is N-terminal L-aspartyl-[protein] + L-leucyl-tRNA(Leu) = N-terminal L-leucyl-L-aspartyl-[protein] + tRNA(Leu) + H(+). In terms of biological role, functions in the N-end rule pathway of protein degradation where it conjugates Leu from its aminoacyl-tRNA to the N-termini of proteins containing an N-terminal aspartate or glutamate. The sequence is that of Aspartate/glutamate leucyltransferase from Pseudomonas putida (strain ATCC 700007 / DSM 6899 / JCM 31910 / BCRC 17059 / LMG 24140 / F1).